A 64-amino-acid polypeptide reads, in one-letter code: Large ribosomal subunit protein uL29 (64 aa).

The protein belongs to the universal ribosomal protein uL29 family.

This is Large ribosomal subunit protein uL29 from Nitratiruptor sp. (strain SB155-2).